A 124-amino-acid chain; its full sequence is Small ribosomal subunit protein uS12 (124 aa).

Position 89 is a 3-methylthioaspartic acid (Asp89).

This sequence belongs to the universal ribosomal protein uS12 family. In terms of assembly, part of the 30S ribosomal subunit. Contacts proteins S8 and S17. May interact with IF1 in the 30S initiation complex.

With S4 and S5 plays an important role in translational accuracy. In terms of biological role, interacts with and stabilizes bases of the 16S rRNA that are involved in tRNA selection in the A site and with the mRNA backbone. Located at the interface of the 30S and 50S subunits, it traverses the body of the 30S subunit contacting proteins on the other side and probably holding the rRNA structure together. The combined cluster of proteins S8, S12 and S17 appears to hold together the shoulder and platform of the 30S subunit. The chain is Small ribosomal subunit protein uS12 from Psychrobacter sp. (strain PRwf-1).